The following is a 559-amino-acid chain: Acetolactate synthase, catabolic (559 aa).

Residues R159, 263 to 284 (FNNQ…IGYS), and 304 to 323 (DVLP…LVGD) contribute to the FAD site. Residue D447 coordinates Mg(2+).

Belongs to the TPP enzyme family. As to quaternary structure, homodimer.

It catalyses the reaction 2 pyruvate + H(+) = (2S)-2-acetolactate + CO2. The protein operates within polyol metabolism; (R,R)-butane-2,3-diol biosynthesis; (R,R)-butane-2,3-diol from pyruvate: step 1/3. The polypeptide is Acetolactate synthase, catabolic (budB) (Raoultella terrigena (Klebsiella terrigena)).